The primary structure comprises 1085 residues: Phosphorylase b kinase regulatory subunit beta (1085 aa).

A phosphoserine mark is found at S10, S19, and S693. 2 calmodulin-binding regions span residues 760–787 (RVYRRAGSKKLWSVVRRAASLLNKVVDS) and 912–943 (SGRCWLNRRQIDGSLNRTPPEFYDRVWQILER). C1082 carries the S-farnesyl cysteine lipid modification.

The protein belongs to the phosphorylase b kinase regulatory chain family. As to quaternary structure, hexadecamer of 4 heterotetramers, each composed of alpha, beta, gamma, and delta subunits. Alpha (PHKA1 or PHKA2) and beta (PHKB) are regulatory subunits, gamma (PHKG1 or PHKG2) is the catalytic subunit, and delta is calmodulin. Post-translationally, although the final Cys may be farnesylated, the terminal tripeptide is probably not removed, and the C-terminus is not methylated.

Its subcellular location is the cell membrane. Its pathway is glycan biosynthesis; glycogen metabolism. Its activity is regulated as follows. By phosphorylation of various serine residues. Phosphorylase b kinase catalyzes the phosphorylation of serine in certain substrates, including troponin I. The beta chain acts as a regulatory unit and modulates the activity of the holoenzyme in response to phosphorylation. This chain is Phosphorylase b kinase regulatory subunit beta (Phkb), found in Mus musculus (Mouse).